We begin with the raw amino-acid sequence, 253 residues long: MMAQSKANGSHYALTAIGLGMLVLGVIMAMWNLVPGFSAAEKPTAQGSNKTEVGGGILKSKTFSVAYVLVGAGVMLLLLSICLSIRDKRKQRQGEDLAHVQHPTGAGPHAQEEDSQEEEEEDEEAASRYYVPSYEEVMNTNYSEARGEEQNPRLSISLPSYESLTGLDETTPTSTRADVEASPGNPPDRQNSKLAKRLKPLKVRRIKSEKLHLKDFRINLPDKNVPPPSIEPLTPPPQYDEVQEKAPDTRPPD.

2 consecutive transmembrane segments (helical) span residues 17-37 (IGLG…VPGF) and 65-85 (VAYV…CLSI). Disordered regions lie at residues 93-133 (QGED…YVPS) and 164-253 (LTGL…RPPD). Residues 113 to 124 (EDSQEEEEEDEE) are compositionally biased toward acidic residues. Ser-115 carries the phosphoserine modification. Over residues 164-176 (LTGLDETTPTSTR) the composition is skewed to polar residues. Phosphoserine is present on residues Ser-182 and Ser-192. Positions 194-205 (LAKRLKPLKVRR) are enriched in basic residues. Over residues 206–217 (IKSEKLHLKDFR) the composition is skewed to basic and acidic residues. The segment covering 224–238 (NVPPPSIEPLTPPPQ) has biased composition (pro residues). Residues 242–253 (VQEKAPDTRPPD) show a composition bias toward basic and acidic residues.

Its subcellular location is the membrane. This Homo sapiens (Human) protein is Transmembrane protein 51 (TMEM51).